Here is a 120-residue protein sequence, read N- to C-terminus: Immunoglobulin lambda variable 4-60 (120 aa).

The signal sequence occupies residues 1-21; that stretch reads MAWTPLLLLFPLLLHCTGSLS. Residues 22–46 form a framework-1 region; that stretch reads QPVLTQSSSASASLGSSVKLTCTLS. One can recognise an Ig-like domain in the interval 23–120; it reads PVLTQSSSAS…YYCETWDSNT (98 aa). C43 and C113 are joined by a disulfide. The complementarity-determining-1 stretch occupies residues 47 to 53; the sequence is SGHSSYI. Residues 54-70 are framework-2; sequence IAWHQQQPGKAPRYLMK. A complementarity-determining-2 region spans residues 71–77; it reads LEGSGSY. The framework-3 stretch occupies residues 78–113; the sequence is NKGSGVPDRFSGSSSGADRYLTISNLQFEDEADYYC. Residues 114–120 are complementarity-determining-3; sequence ETWDSNT.

As to quaternary structure, immunoglobulins are composed of two identical heavy chains and two identical light chains; disulfide-linked.

Its subcellular location is the secreted. The protein localises to the cell membrane. In terms of biological role, v region of the variable domain of immunoglobulin light chains that participates in the antigen recognition. Immunoglobulins, also known as antibodies, are membrane-bound or secreted glycoproteins produced by B lymphocytes. In the recognition phase of humoral immunity, the membrane-bound immunoglobulins serve as receptors which, upon binding of a specific antigen, trigger the clonal expansion and differentiation of B lymphocytes into immunoglobulins-secreting plasma cells. Secreted immunoglobulins mediate the effector phase of humoral immunity, which results in the elimination of bound antigens. The antigen binding site is formed by the variable domain of one heavy chain, together with that of its associated light chain. Thus, each immunoglobulin has two antigen binding sites with remarkable affinity for a particular antigen. The variable domains are assembled by a process called V-(D)-J rearrangement and can then be subjected to somatic hypermutations which, after exposure to antigen and selection, allow affinity maturation for a particular antigen. In Homo sapiens (Human), this protein is Immunoglobulin lambda variable 4-60.